A 123-amino-acid polypeptide reads, in one-letter code: Ribosome-binding factor A (123 aa).

It belongs to the RbfA family. In terms of assembly, monomer. Binds 30S ribosomal subunits, but not 50S ribosomal subunits or 70S ribosomes.

It is found in the cytoplasm. Functionally, one of several proteins that assist in the late maturation steps of the functional core of the 30S ribosomal subunit. Associates with free 30S ribosomal subunits (but not with 30S subunits that are part of 70S ribosomes or polysomes). Required for efficient processing of 16S rRNA. May interact with the 5'-terminal helix region of 16S rRNA. The protein is Ribosome-binding factor A of Chlorobium chlorochromatii (strain CaD3).